Here is a 201-residue protein sequence, read N- to C-terminus: Zinc finger protein 239 (201 aa).

7 consecutive C2H2-type zinc fingers follow at residues 6 to 28 (YKCD…HSVH), 34 to 56 (FKCD…KRVH), 62 to 84 (YACE…QRVH), 90 to 112 (YKCG…RCTH), 118 to 140 (YQCY…LRVH), 146 to 168 (YHCG…QRVH), and 174 to 196 (YECS…QRVH).

This sequence belongs to the krueppel C2H2-type zinc-finger protein family. In terms of tissue distribution, preferentially expressed in transformed mouse cells.

It is found in the nucleus. Its function is as follows. May be involved in transcriptional regulation. The polypeptide is Zinc finger protein 239 (Znf239) (Mus musculus (Mouse)).